A 714-amino-acid polypeptide reads, in one-letter code: Fatty acid oxidation complex subunit alpha (714 aa).

An enoyl-CoA hydratase region spans residues 1 to 190 (MDTVSAFKLE…KAGLVDEVVP (190 aa)). A 3-hydroxyacyl-CoA dehydrogenase region spans residues 306–714 (GSLRSVAVLG…TFWPADERLT (409 aa)).

The protein in the N-terminal section; belongs to the enoyl-CoA hydratase/isomerase family. This sequence in the central section; belongs to the 3-hydroxyacyl-CoA dehydrogenase family. As to quaternary structure, heterotetramer of two alpha chains (FadJ) and two beta chains (FadI).

The protein localises to the cytoplasm. It catalyses the reaction a (3S)-3-hydroxyacyl-CoA = a (2E)-enoyl-CoA + H2O. It carries out the reaction a 4-saturated-(3S)-3-hydroxyacyl-CoA = a (3E)-enoyl-CoA + H2O. The enzyme catalyses a (3S)-3-hydroxyacyl-CoA + NAD(+) = a 3-oxoacyl-CoA + NADH + H(+). The catalysed reaction is (3S)-3-hydroxybutanoyl-CoA = (3R)-3-hydroxybutanoyl-CoA. Its pathway is lipid metabolism; fatty acid beta-oxidation. Functionally, catalyzes the formation of a hydroxyacyl-CoA by addition of water on enoyl-CoA. Also exhibits 3-hydroxyacyl-CoA epimerase and 3-hydroxyacyl-CoA dehydrogenase activities. This chain is Fatty acid oxidation complex subunit alpha, found in Klebsiella pneumoniae subsp. pneumoniae (strain ATCC 700721 / MGH 78578).